A 645-amino-acid polypeptide reads, in one-letter code: Glucans biosynthesis glucosyltransferase H (645 aa).

The span at 1-12 (MDGTVTLSSTPT) shows a compositional bias: polar residues. The interval 1–22 (MDGTVTLSSTPTAIPPVSALDA) is disordered. 7 consecutive transmembrane segments (helical) span residues 64-84 (LIGG…SVLW), 98-118 (LFTL…AGFV), 423-443 (APMW…GVGI), 465-485 (AIWI…LGYI), 504-524 (AVSI…VMYL), 559-579 (YGGL…VSPA), and 580-600 (LAAW…VVAL).

It belongs to the glycosyltransferase 2 family. OpgH subfamily.

The protein resides in the cell inner membrane. It participates in glycan metabolism; osmoregulated periplasmic glucan (OPG) biosynthesis. Functionally, involved in the biosynthesis of osmoregulated periplasmic glucans (OPGs). The sequence is that of Glucans biosynthesis glucosyltransferase H from Xanthomonas oryzae pv. oryzae (strain MAFF 311018).